The sequence spans 255 residues: Taurine import ATP-binding protein TauB (255 aa).

The ABC transporter domain occupies 2–229; that stretch reads LQISHLYADY…RFVAGESSRS (228 aa). 34–41 contributes to the ATP binding site; the sequence is GPSGCGKT.

The protein belongs to the ABC transporter superfamily. Taurine importer (TC 3.A.1.17.1) family. As to quaternary structure, the complex is composed of two ATP-binding proteins (TauB), two transmembrane proteins (TauC) and a solute-binding protein (TauA).

It is found in the cell inner membrane. It carries out the reaction taurine(out) + ATP + H2O = taurine(in) + ADP + phosphate + H(+). Its function is as follows. Part of the ABC transporter complex TauABC involved in taurine import. Responsible for energy coupling to the transport system. The chain is Taurine import ATP-binding protein TauB from Shigella flexneri serotype 5b (strain 8401).